Reading from the N-terminus, the 367-residue chain is Glutamate 5-kinase (367 aa).

K10 is a binding site for ATP. Substrate-binding residues include S50, D137, and N149. ATP contacts are provided by residues 169–170 (TD) and 211–217 (TGGMGTK). In terms of domain architecture, PUA spans 275 to 353 (AGEITVDDGA…QEISEILGYE (79 aa)).

Belongs to the glutamate 5-kinase family.

Its subcellular location is the cytoplasm. The enzyme catalyses L-glutamate + ATP = L-glutamyl 5-phosphate + ADP. Its pathway is amino-acid biosynthesis; L-proline biosynthesis; L-glutamate 5-semialdehyde from L-glutamate: step 1/2. Its function is as follows. Catalyzes the transfer of a phosphate group to glutamate to form L-glutamate 5-phosphate. The protein is Glutamate 5-kinase of Serratia proteamaculans (strain 568).